Consider the following 206-residue polypeptide: CASP-like protein 1F1 (206 aa).

The Cytoplasmic segment spans residues 1–43; sequence MCFQFSILYTCYLAHFGVFPRKYLVMAGIEAKFQQNPPLGTHK. The helical transmembrane segment at 44–64 threads the bilayer; that stretch reads LFLGAHICLRILTVTATLTAA. Topologically, residues 65–92 are extracellular; it reads WMMITSKQTVEVYGIQVEAKYSYSSAFK. A helical transmembrane segment spans residues 93-113; sequence FFSYANAIACGCSVLTLFPAF. The Cytoplasmic portion of the chain corresponds to 114-124; sequence SLFYRGSTPMK. The helical transmembrane segment at 125–145 threads the bilayer; the sequence is FFFLFLHDLCMMSLVLAGCAA. At 146–177 the chain is on the extracellular side; that stretch reads ATAIGYVGRYGNNHAGWMAICDQFDEYCNRIR. The helical transmembrane segment at 178-198 threads the bilayer; the sequence is LSLMFSYLAFVFILMLTIMSA. Residues 199–206 lie on the Cytoplasmic side of the membrane; it reads NKSREIRV.

This sequence belongs to the Casparian strip membrane proteins (CASP) family. Homodimer and heterodimers.

It localises to the cell membrane. This chain is CASP-like protein 1F1, found in Vitis vinifera (Grape).